The following is a 323-amino-acid chain: Transaldolase (323 aa).

The active-site Schiff-base intermediate with substrate is the K133.

The protein belongs to the transaldolase family. Type 1 subfamily. In terms of assembly, monomer.

The catalysed reaction is D-sedoheptulose 7-phosphate + D-glyceraldehyde 3-phosphate = D-erythrose 4-phosphate + beta-D-fructose 6-phosphate. It participates in carbohydrate degradation; pentose phosphate pathway; D-glyceraldehyde 3-phosphate and beta-D-fructose 6-phosphate from D-ribose 5-phosphate and D-xylulose 5-phosphate (non-oxidative stage): step 2/3. In terms of biological role, important for the balance of metabolites in the pentose-phosphate pathway. Involved in xylose fermentation to ethanol. This is Transaldolase from Gibberella intermedia (Bulb rot disease fungus).